The primary structure comprises 245 residues: Chloride intracellular channel protein 2 (245 aa).

The required for insertion into the membrane stretch occupies residues 1–96 (MASLALNTQA…EEFLEKTLAP (96 aa)). Glu-25 is a glutathione binding site. The G-site signature appears at 30 to 33 (CPFC). Residues Cys-30 and Cys-33 are joined by a disulfide bond. A helical transmembrane segment spans residues 32 to 52 (FCQRLFMILWLKGVKFNVTTI). The GST C-terminal domain maps to 76 to 239 (NKELKTDFIK…PEDKEIENTY (164 aa)). A glutathione-binding site is contributed by His-227.

Belongs to the chloride channel CLIC family. As to quaternary structure, monomer. Interacts with TRAPPC2 and RYR2.

It is found in the cytoplasm. The protein resides in the membrane. It catalyses the reaction chloride(in) = chloride(out). The catalysed reaction is tert-butyl hydroperoxide + 2 glutathione = tert-butanol + glutathione disulfide + H2O. The enzyme catalyses cumene hydroperoxide + 2 glutathione = 2-phenylpropan-2-ol + glutathione disulfide + H2O. In the soluble state, catalyzes glutaredoxin-like thiol disulfide exchange reactions with reduced glutathione as electron donor. Displays weak glutathione peroxidase activity. Can insert into membranes and form chloride ion channels. Membrane insertion seems to be redox-regulated and may occur only under oxidizing conditions. Modulates the activity of RYR2 and inhibits calcium influx. The protein is Chloride intracellular channel protein 2 of Rattus norvegicus (Rat).